A 566-amino-acid chain; its full sequence is Mediator of RNA polymerase II transcription subunit 1 (566 aa).

Residue Ser155 is modified to Phosphoserine. Residues 361-425 (TPSSNSNSSE…TNKSKRPSIT (65 aa)) form a disordered region. Basic residues predominate over residues 410 to 421 (RRRRSSTNKSKR). Ser423 carries the post-translational modification Phosphoserine.

The protein belongs to the Mediator complex subunit 1 family. Component of the Mediator complex, which is composed of at least 21 subunits that form three structurally distinct submodules. The Mediator head module contains MED6, MED8, MED11, SRB4/MED17, SRB5/MED18, ROX3/MED19, SRB2/MED20 and SRB6/MED22, the middle module contains MED1, MED4, NUT1/MED5, MED7, CSE2/MED9, NUT2/MED10, SRB7/MED21 and SOH1/MED31, and the tail module contains MED2, PGD1/MED3, RGR1/MED14, GAL11/MED15 and SIN4/MED16. The head and the middle modules interact directly with RNA polymerase II, whereas the elongated tail module interacts with gene-specific regulatory proteins. MED1 interacts directly with MED4 and MED7.

It is found in the nucleus. In terms of biological role, component of the Mediator complex, a coactivator involved in the regulated transcription of nearly all RNA polymerase II-dependent genes. Mediator functions as a bridge to convey information from gene-specific regulatory proteins to the basal RNA polymerase II transcription machinery. The Mediator complex, having a compact conformation in its free form, is recruited to promoters by direct interactions with regulatory proteins and serves for the assembly of a functional preinitiation complex with RNA polymerase II and the general transcription factors. The Mediator complex unfolds to an extended conformation and partially surrounds RNA polymerase II, specifically interacting with the unphosphorylated form of the C-terminal domain (CTD) of RNA polymerase II. The Mediator complex dissociates from the RNA polymerase II holoenzyme and stays at the promoter when transcriptional elongation begins. In Saccharomyces cerevisiae (strain ATCC 204508 / S288c) (Baker's yeast), this protein is Mediator of RNA polymerase II transcription subunit 1 (MED1).